The primary structure comprises 258 residues: Tryptophan synthase alpha chain (258 aa).

Active-site proton acceptor residues include Glu47 and Asp58.

Belongs to the TrpA family. In terms of assembly, tetramer of two alpha and two beta chains.

It carries out the reaction (1S,2R)-1-C-(indol-3-yl)glycerol 3-phosphate + L-serine = D-glyceraldehyde 3-phosphate + L-tryptophan + H2O. Its pathway is amino-acid biosynthesis; L-tryptophan biosynthesis; L-tryptophan from chorismate: step 5/5. Its function is as follows. The alpha subunit is responsible for the aldol cleavage of indoleglycerol phosphate to indole and glyceraldehyde 3-phosphate. The polypeptide is Tryptophan synthase alpha chain (Bacillus thuringiensis (strain Al Hakam)).